A 279-amino-acid chain; its full sequence is HTH-type transcriptional regulator BhcR (279 aa).

The segment covering 1–13 (MSVQIRKRGRPRG) has biased composition (basic residues). Residues 1-21 (MSVQIRKRGRPRGRAGGLGAE) are disordered. The region spanning 26–87 (IRALDRALDI…SQTQAWHVGP (62 aa)) is the HTH iclR-type domain. A DNA-binding region (H-T-H motif) is located at residues 47–66 (LTEIAQRLDMAPSTVHRVLV). Residues 102–271 (LVERARPLLR…ARELSFGMAP (170 aa)) enclose the IclR-ED domain.

Transcriptional regulator of the bhc gene cluster involved in glycolate and glyoxylate assimilation via the beta-hydroxyaspartate cycle (BHAC). Glyoxylate negatively affects the interaction of BhcR with the promoter region of the bhc gene cluster. This is HTH-type transcriptional regulator BhcR from Paracoccus denitrificans (strain Pd 1222).